The sequence spans 127 residues: MFAVIKTGGKQYRVAPDDVLEIGKIDGEPGTIVQLNEVLVVGGDTPVLGVPAVAGASVAVEVLDHKRGPKVIAFKKRRRKNSRRKRGYRDELTLIRVSEILTDNAKPTKGPRPKKAKAEAPAADAAE.

The interval 102-127 is disordered; the sequence is TDNAKPTKGPRPKKAKAEAPAADAAE.

It belongs to the bacterial ribosomal protein bL21 family. In terms of assembly, part of the 50S ribosomal subunit. Contacts protein L20.

Its function is as follows. This protein binds to 23S rRNA in the presence of protein L20. The sequence is that of Large ribosomal subunit protein bL21 from Bradyrhizobium sp. (strain BTAi1 / ATCC BAA-1182).